Here is a 254-residue protein sequence, read N- to C-terminus: Casein kinase II subunit beta-2 (254 aa).

This sequence belongs to the casein kinase 2 subunit beta family. As to quaternary structure, tetramer composed of two alpha chains, one beta chain and one beta' chain. Post-translationally, phosphorylated by alpha subunit.

Regulatory subunit of casein kinase II/CK2. As part of the kinase complex regulates the basal catalytic activity of the alpha subunit a constitutively active serine/threonine-protein kinase that phosphorylates a large number of substrates containing acidic residues C-terminal to the phosphorylated serine or threonine. This chain is Casein kinase II subunit beta-2, found in Schizosaccharomyces pombe (strain 972 / ATCC 24843) (Fission yeast).